The following is a 372-amino-acid chain: L-selectin (372 aa).

The first 28 residues, 1-28 (MIFPWKCQSTQRDLWNIFKLWGWTMLCC), serve as a signal peptide directing secretion. Positions 29–38 (DFLAHHGTDC) are excised as a propeptide. The Extracellular segment spans residues 39–332 (WTYHYSEKPM…FSMIKEGDYN (294 aa)). Positions 55-155 (RFCRDNYTDL…ACHKLKAALC (101 aa)) constitute a C-type lectin domain. Disulfide bonds link cysteine 57–cysteine 155, cysteine 128–cysteine 147, cysteine 160–cysteine 171, cysteine 165–cysteine 180, cysteine 182–cysteine 191, cysteine 197–cysteine 241, cysteine 227–cysteine 254, cysteine 259–cysteine 303, and cysteine 289–cysteine 316. Residues asparagine 60 and asparagine 104 are each glycosylated (N-linked (GlcNAc...) asparagine). 5 residues coordinate Ca(2+): glutamate 118, asparagine 120, glutamate 126, asparagine 143, and aspartate 144. Positions 156-192 (YTASCQPWSCSGHGECVEIINNYTCNCDVGYYGPQCQ) constitute an EGF-like domain. Asparagine 177 carries an N-linked (GlcNAc...) asparagine glycan. Sushi domains are found at residues 195-256 (IQCE…TCQV) and 257-318 (IQCE…ICQK). 3 N-linked (GlcNAc...) asparagine glycosylation sites follow: asparagine 232, asparagine 246, and asparagine 271. The chain crosses the membrane as a helical span at residues 333–355 (PLFIPVAVMVTAFSGLAFIIWLA). The Cytoplasmic portion of the chain corresponds to 356 to 372 (RRLKKGKKSKRSMNDPY).

It belongs to the selectin/LECAM family. Interaction with SELPLG/PSGL1 and PODXL2 is required for promoting recruitment and rolling of leukocytes. This interaction is dependent on the sialyl Lewis X glycan modification of SELPLG and PODXL2, and tyrosine sulfation modifications of SELPLG. Sulfation on 'Tyr-51' of SELPLG is important for L-selectin binding. In terms of processing, N-glycosylated. Expressed in B-cell lines and T-lymphocytes.

The protein localises to the cell membrane. Functionally, calcium-dependent lectin that mediates cell adhesion by binding to glycoproteins on neighboring cells. Mediates the adherence of lymphocytes to endothelial cells of high endothelial venules in peripheral lymph nodes. Promotes initial tethering and rolling of leukocytes in endothelia. This is L-selectin (SELL) from Homo sapiens (Human).